We begin with the raw amino-acid sequence, 578 residues long: Sulfite reductase [NADPH] hemoprotein beta-component (578 aa).

Residues 1 to 11 are compositionally biased toward polar residues; that stretch reads MSANQQSNSQE. Positions 1-20 are disordered; the sequence is MSANQQSNSQEVLGEVLGPL. The [4Fe-4S] cluster site is built by C441, C447, C487, and C491. C491 contributes to the siroheme binding site.

Belongs to the nitrite and sulfite reductase 4Fe-4S domain family. Alpha(8)-beta(8). The alpha component is a flavoprotein, the beta component is a hemoprotein. The cofactor is siroheme. [4Fe-4S] cluster is required as a cofactor.

It carries out the reaction hydrogen sulfide + 3 NADP(+) + 3 H2O = sulfite + 3 NADPH + 4 H(+). It functions in the pathway sulfur metabolism; hydrogen sulfide biosynthesis; hydrogen sulfide from sulfite (NADPH route): step 1/1. Component of the sulfite reductase complex that catalyzes the 6-electron reduction of sulfite to sulfide. This is one of several activities required for the biosynthesis of L-cysteine from sulfate. The protein is Sulfite reductase [NADPH] hemoprotein beta-component of Vibrio campbellii (strain ATCC BAA-1116).